Reading from the N-terminus, the 202-residue chain is IMP cyclohydrolase (202 aa).

It belongs to the archaeal IMP cyclohydrolase family.

It carries out the reaction IMP + H2O = 5-formamido-1-(5-phospho-D-ribosyl)imidazole-4-carboxamide. Its pathway is purine metabolism; IMP biosynthesis via de novo pathway; IMP from 5-formamido-1-(5-phospho-D-ribosyl)imidazole-4-carboxamide: step 1/1. Its function is as follows. Catalyzes the cyclization of 5-formylamidoimidazole-4-carboxamide ribonucleotide to IMP. In Methanosphaera stadtmanae (strain ATCC 43021 / DSM 3091 / JCM 11832 / MCB-3), this protein is IMP cyclohydrolase.